A 466-amino-acid polypeptide reads, in one-letter code: 3-isopropylmalate dehydratase large subunit (466 aa).

Residues Cys-347, Cys-407, and Cys-410 each contribute to the [4Fe-4S] cluster site.

It belongs to the aconitase/IPM isomerase family. LeuC type 1 subfamily. Heterodimer of LeuC and LeuD. It depends on [4Fe-4S] cluster as a cofactor.

The enzyme catalyses (2R,3S)-3-isopropylmalate = (2S)-2-isopropylmalate. The protein operates within amino-acid biosynthesis; L-leucine biosynthesis; L-leucine from 3-methyl-2-oxobutanoate: step 2/4. In terms of biological role, catalyzes the isomerization between 2-isopropylmalate and 3-isopropylmalate, via the formation of 2-isopropylmaleate. This is 3-isopropylmalate dehydratase large subunit from Citrobacter koseri (strain ATCC BAA-895 / CDC 4225-83 / SGSC4696).